Here is a 162-residue protein sequence, read N- to C-terminus: Crossover junction endodeoxyribonuclease RuvC (162 aa).

Residues Asp8, Glu69, and His141 contribute to the active site. The Mg(2+) site is built by Asp8, Glu69, and His141.

The protein belongs to the RuvC family. In terms of assembly, homodimer which binds Holliday junction (HJ) DNA. The HJ becomes 2-fold symmetrical on binding to RuvC with unstacked arms; it has a different conformation from HJ DNA in complex with RuvA. In the full resolvosome a probable DNA-RuvA(4)-RuvB(12)-RuvC(2) complex forms which resolves the HJ. Requires Mg(2+) as cofactor.

The protein resides in the cytoplasm. The enzyme catalyses Endonucleolytic cleavage at a junction such as a reciprocal single-stranded crossover between two homologous DNA duplexes (Holliday junction).. In terms of biological role, the RuvA-RuvB-RuvC complex processes Holliday junction (HJ) DNA during genetic recombination and DNA repair. Endonuclease that resolves HJ intermediates. Cleaves cruciform DNA by making single-stranded nicks across the HJ at symmetrical positions within the homologous arms, yielding a 5'-phosphate and a 3'-hydroxyl group; requires a central core of homology in the junction. The consensus cleavage sequence is 5'-(A/T)TT(C/G)-3'. Cleavage occurs on the 3'-side of the TT dinucleotide at the point of strand exchange. HJ branch migration catalyzed by RuvA-RuvB allows RuvC to scan DNA until it finds its consensus sequence, where it cleaves and resolves the cruciform DNA. The polypeptide is Crossover junction endodeoxyribonuclease RuvC (Wolbachia sp. subsp. Drosophila simulans (strain wRi)).